The following is a 915-amino-acid chain: DNA (cytosine-5)-methyltransferase 3 (915 aa).

A compositionally biased stretch (low complexity) spans 1-14 (MAPSSPSSARPTRA). 2 disordered regions span residues 1 to 107 (MAPS…AEEQ) and 152 to 171 (HSNW…PEED). The segment covering 21-30 (AMAEEIHQNQ) has biased composition (basic and acidic residues). The segment covering 42–57 (AKRRRKAASSGKKPKP) has biased composition (basic residues). Positions 71 to 80 (KKGETEKTEP) are enriched in basic and acidic residues. Over residues 81–107 (VVDDVCAEEPDEEELAMGEEEAEAEEQ) the composition is skewed to acidic residues. Residues 188 to 313 (IVYCLGDDVY…VAYSTFANIS (126 aa)) form the BAH domain. Residues 315–328 (ENGQSGSETASGIS) show a composition bias toward polar residues. A disordered region spans residues 315-338 (ENGQSGSETASGISSDDAGLETSS). Residues 345–876 (ATLLDLYSGC…YCLGQAYLGE (532 aa)) form the SAM-dependent MTase C5-type domain. One can recognise a Chromo domain in the interval 445–508 (FVVQKLIGIR…EGRKRKILPL (64 aa)). Residue Cys521 is part of the active site.

This sequence belongs to the class I-like SAM-binding methyltransferase superfamily. C5-methyltransferase family.

Its subcellular location is the nucleus. It catalyses the reaction a 2'-deoxycytidine in DNA + S-adenosyl-L-methionine = a 5-methyl-2'-deoxycytidine in DNA + S-adenosyl-L-homocysteine + H(+). Functionally, may be involved in the CpXpG methylation and in gene silencing. The polypeptide is DNA (cytosine-5)-methyltransferase 3 (DMT105) (Zea mays (Maize)).